A 948-amino-acid polypeptide reads, in one-letter code: Valine--tRNA ligase (948 aa).

The 'HIGH' region motif lies at 40–50 (PNVTGSLHMGH). The 'KMSKS' region signature appears at 551–555 (KMSKS). Lysine 554 contributes to the ATP binding site. The stretch at 879 to 947 (LIDKGAELAR…LAEQHARISS (69 aa)) forms a coiled coil.

Belongs to the class-I aminoacyl-tRNA synthetase family. ValS type 1 subfamily. As to quaternary structure, monomer.

The protein resides in the cytoplasm. It catalyses the reaction tRNA(Val) + L-valine + ATP = L-valyl-tRNA(Val) + AMP + diphosphate. Its function is as follows. Catalyzes the attachment of valine to tRNA(Val). As ValRS can inadvertently accommodate and process structurally similar amino acids such as threonine, to avoid such errors, it has a 'posttransfer' editing activity that hydrolyzes mischarged Thr-tRNA(Val) in a tRNA-dependent manner. The protein is Valine--tRNA ligase of Pseudomonas fluorescens (strain ATCC BAA-477 / NRRL B-23932 / Pf-5).